The primary structure comprises 361 residues: 3-dehydroquinate synthase (361 aa).

It belongs to the archaeal-type DHQ synthase family.

It catalyses the reaction 2-amino-2,3,7-trideoxy-D-lyxo-hept-6-ulosonate + NAD(+) + H2O = 3-dehydroquinate + NH4(+) + NADH + H(+). Catalyzes the oxidative deamination and cyclization of 2-amino-3,7-dideoxy-D-threo-hept-6-ulosonic acid (ADH) to yield 3-dehydroquinate (DHQ), which is fed into the canonical shikimic pathway of aromatic amino acid biosynthesis. This Methanococcus maripaludis (strain DSM 14266 / JCM 13030 / NBRC 101832 / S2 / LL) protein is 3-dehydroquinate synthase.